Here is a 372-residue protein sequence, read N- to C-terminus: NAD(P)H-quinone oxidoreductase subunit 1 (372 aa).

The next 9 membrane-spanning stretches (helical) occupy residues 27-47 (AIWM…GVLV), 65-85 (PEYI…KLVF), 97-117 (WLFT…YLIV), 128-148 (IGTG…GLLM), 166-186 (AAQS…IVMM), 204-224 (ILGW…IAAL), 266-286 (VLSA…PIPI), 308-328 (ALGI…AILL), and 347-367 (FLLP…LAFP).

Belongs to the complex I subunit 1 family. As to quaternary structure, NDH-1 is composed of at least 11 different subunits.

Its subcellular location is the cellular thylakoid membrane. The catalysed reaction is a plastoquinone + NADH + (n+1) H(+)(in) = a plastoquinol + NAD(+) + n H(+)(out). It catalyses the reaction a plastoquinone + NADPH + (n+1) H(+)(in) = a plastoquinol + NADP(+) + n H(+)(out). NDH-1 shuttles electrons from an unknown electron donor, via FMN and iron-sulfur (Fe-S) centers, to quinones in the respiratory and/or the photosynthetic chain. The immediate electron acceptor for the enzyme in this species is believed to be plastoquinone. Couples the redox reaction to proton translocation, and thus conserves the redox energy in a proton gradient. The polypeptide is NAD(P)H-quinone oxidoreductase subunit 1 (Trichormus variabilis (strain ATCC 29413 / PCC 7937) (Anabaena variabilis)).